Consider the following 555-residue polypeptide: Formate--tetrahydrofolate ligase (555 aa).

65-72 contributes to the ATP binding site; sequence TPAGEGKT.

Belongs to the formate--tetrahydrofolate ligase family.

It carries out the reaction (6S)-5,6,7,8-tetrahydrofolate + formate + ATP = (6R)-10-formyltetrahydrofolate + ADP + phosphate. It participates in one-carbon metabolism; tetrahydrofolate interconversion. This chain is Formate--tetrahydrofolate ligase, found in Paracoccus denitrificans (strain Pd 1222).